Here is a 58-residue protein sequence, read N- to C-terminus: Small ribosomal subunit protein bS21 (58 aa).

The disordered stretch occupies residues 37 to 58; it reads FYEKPSVKRKRKSEAARKRKKF. Positions 43–58 are enriched in basic residues; sequence VKRKRKSEAARKRKKF.

This sequence belongs to the bacterial ribosomal protein bS21 family.

This chain is Small ribosomal subunit protein bS21, found in Streptococcus sanguinis (strain SK36).